The primary structure comprises 347 residues: D-fructose 1,6-bisphosphatase class 2/sedoheptulose 1,7-bisphosphatase (347 aa).

Residues aspartate 33, glutamate 57, aspartate 97, and glutamate 100 each contribute to the Mn(2+) site. Residues 100 to 102, tyrosine 131, 176 to 178, and 198 to 200 each bind substrate; these read EGT, RKR, and DGD. Glutamate 225 provides a ligand contact to Mn(2+).

It belongs to the FBPase class 2 family. Homotetramer. Mn(2+) is required as a cofactor.

It catalyses the reaction beta-D-fructose 1,6-bisphosphate + H2O = beta-D-fructose 6-phosphate + phosphate. The catalysed reaction is D-sedoheptulose 1,7-bisphosphate + H2O = D-sedoheptulose 7-phosphate + phosphate. It functions in the pathway carbohydrate biosynthesis; Calvin cycle. Functionally, catalyzes the hydrolysis of fructose 1,6-bisphosphate (Fru 1,6-P2) and sedoheptulose 1,7-bisphosphate (Sed 1,7-P2) to fructose 6-phosphate and sedoheptulose 7-phosphate, respectively. This chain is D-fructose 1,6-bisphosphatase class 2/sedoheptulose 1,7-bisphosphatase, found in Synechococcus sp. (strain JA-3-3Ab) (Cyanobacteria bacterium Yellowstone A-Prime).